The following is a 313-amino-acid chain: Ribosomal RNA small subunit methyltransferase H (313 aa).

Residues 33–35 (AGH), Asp-53, Phe-82, Asp-103, and Gln-110 each bind S-adenosyl-L-methionine.

This sequence belongs to the methyltransferase superfamily. RsmH family.

Its subcellular location is the cytoplasm. It catalyses the reaction cytidine(1402) in 16S rRNA + S-adenosyl-L-methionine = N(4)-methylcytidine(1402) in 16S rRNA + S-adenosyl-L-homocysteine + H(+). In terms of biological role, specifically methylates the N4 position of cytidine in position 1402 (C1402) of 16S rRNA. This is Ribosomal RNA small subunit methyltransferase H from Acetivibrio thermocellus (strain ATCC 27405 / DSM 1237 / JCM 9322 / NBRC 103400 / NCIMB 10682 / NRRL B-4536 / VPI 7372) (Clostridium thermocellum).